Reading from the N-terminus, the 245-residue chain is Lactate utilization protein A 1 (245 aa).

This sequence belongs to the LutA/YkgE family.

Is involved in L-lactate degradation and allows cells to grow with lactate as the sole carbon source. The chain is Lactate utilization protein A 1 from Bacillus mycoides (strain KBAB4) (Bacillus weihenstephanensis).